The sequence spans 166 residues: Putative lipoprotein Lxx21020 (166 aa).

A signal peptide spans 1–22 (MTKTTRLLRATTVAAILLGLTG). Residue Cys23 is the site of N-palmitoyl cysteine attachment. The S-diacylglycerol cysteine moiety is linked to residue Cys23.

It localises to the cell membrane. The chain is Putative lipoprotein Lxx21020 from Leifsonia xyli subsp. xyli (strain CTCB07).